We begin with the raw amino-acid sequence, 466 residues long: Soluble pyridine nucleotide transhydrogenase (466 aa).

36 to 45 serves as a coordination point for FAD; that stretch reads EKESSVGGGC.

It belongs to the class-I pyridine nucleotide-disulfide oxidoreductase family. FAD is required as a cofactor.

It localises to the cytoplasm. It catalyses the reaction NAD(+) + NADPH = NADH + NADP(+). Conversion of NADPH, generated by peripheral catabolic pathways, to NADH, which can enter the respiratory chain for energy generation. This is Soluble pyridine nucleotide transhydrogenase from Vibrio vulnificus (strain CMCP6).